Reading from the N-terminus, the 504-residue chain is Maturase K (504 aa).

The protein belongs to the intron maturase 2 family. MatK subfamily.

Its subcellular location is the plastid. The protein localises to the chloroplast. Functionally, usually encoded in the trnK tRNA gene intron. Probably assists in splicing its own and other chloroplast group II introns. The polypeptide is Maturase K (Fagus japonica (Japanese beech)).